The sequence spans 104 residues: Small ribosomal subunit protein bS6c (104 aa).

The protein belongs to the bacterial ribosomal protein bS6 family.

It localises to the plastid. It is found in the cyanelle. In terms of biological role, binds together with bS18 to 16S ribosomal RNA. In Cyanophora paradoxa, this protein is Small ribosomal subunit protein bS6c (rps6).